The sequence spans 207 residues: MKIIHKGLVEYLPTFEAMKTFNAGRNADTEDELWVVEHPPVFTQGLAGKPEHLLIRDDIPVVQIDRGGQITYHGPGQLVVYTMIDFKRRKTSVRNIVSALENSIIATLAEYGIEAAADPKRPGIYVGERKIASLGLRIKNGSVYHGLALNVNMDLSPFTQINPCGYAGMEMTQIADFVQPCPAPDEVASKLTAHLETQLTPKADNNE.

Residues 27–203 (ADTEDELWVV…HLETQLTPKA (177 aa)) enclose the BPL/LPL catalytic domain. Substrate-binding positions include 66-73 (RGGQITYH), 133-135 (SLG), and 146-148 (GLA). Cys-164 functions as the Acyl-thioester intermediate in the catalytic mechanism.

It belongs to the LipB family.

It localises to the cytoplasm. It catalyses the reaction octanoyl-[ACP] + L-lysyl-[protein] = N(6)-octanoyl-L-lysyl-[protein] + holo-[ACP] + H(+). It participates in protein modification; protein lipoylation via endogenous pathway; protein N(6)-(lipoyl)lysine from octanoyl-[acyl-carrier-protein]: step 1/2. Catalyzes the transfer of endogenously produced octanoic acid from octanoyl-acyl-carrier-protein onto the lipoyl domains of lipoate-dependent enzymes. Lipoyl-ACP can also act as a substrate although octanoyl-ACP is likely to be the physiological substrate. This chain is Octanoyltransferase, found in Neisseria gonorrhoeae (strain ATCC 700825 / FA 1090).